The sequence spans 218 residues: Deoxyribose-phosphate aldolase (218 aa).

Aspartate 92 acts as the Proton donor/acceptor in catalysis. Lysine 156 serves as the catalytic Schiff-base intermediate with acetaldehyde. Residue lysine 185 is the Proton donor/acceptor of the active site.

It belongs to the DeoC/FbaB aldolase family. DeoC type 1 subfamily.

It is found in the cytoplasm. It carries out the reaction 2-deoxy-D-ribose 5-phosphate = D-glyceraldehyde 3-phosphate + acetaldehyde. It functions in the pathway carbohydrate degradation; 2-deoxy-D-ribose 1-phosphate degradation; D-glyceraldehyde 3-phosphate and acetaldehyde from 2-deoxy-alpha-D-ribose 1-phosphate: step 2/2. Catalyzes a reversible aldol reaction between acetaldehyde and D-glyceraldehyde 3-phosphate to generate 2-deoxy-D-ribose 5-phosphate. The chain is Deoxyribose-phosphate aldolase from Desulfitobacterium hafniense (strain DSM 10664 / DCB-2).